A 686-amino-acid polypeptide reads, in one-letter code: Disintegrin and metalloproteinase domain-containing protein 17 homolog (686 aa).

Residues 1–21 form the signal peptide; it reads MKIQDRSLLIFLVLGILKSDA. Positions 22–177 are excised as a propeptide; sequence FNTRVKRHAP…RRAIAIPSDR (156 aa). Residues N59, N206, and N262 are each glycosylated (N-linked (GlcNAc...) asparagine). The Extracellular portion of the chain corresponds to 178 to 637; it reads RKDVLNVKRN…TGGVLEFIKT (460 aa). A Peptidase M12B domain is found at 187–445; sequence NRCTLKLVAD…KWESCFQEEM (259 aa). 2 cysteine pairs are disulfide-bonded: C328-C440 and C394-C424. H370 is a Zn(2+) binding site. E371 is a catalytic residue. Residues H374 and H380 each contribute to the Zn(2+) site. A Disintegrin domain is found at 446-535; that stretch reads TSFCGNGIVE…ECPSAPPVRD (90 aa). An N-linked (GlcNAc...) asparagine glycan is attached at N501. C506 and C527 are disulfide-bonded. N581 carries N-linked (GlcNAc...) asparagine glycosylation. Residues 638 to 658 form a helical membrane-spanning segment; the sequence is HIVVIAIIFFTLIFVGIYKIV. The Cytoplasmic segment spans residues 659-686; that stretch reads KYGENFTEKVTHKTAGGCRSVFVKADVN.

Zn(2+) is required as a cofactor.

The protein localises to the cell membrane. Its function is as follows. Metalloprotease. Acts together with protease sup-17 to facilitate lin-12/Notch signaling during developmental cell fate decision, including anchor cell/ventral uterine precursor cell decision. By modulating glp-1/Notch signaling, plays a role in germline development. The sequence is that of Disintegrin and metalloproteinase domain-containing protein 17 homolog from Caenorhabditis elegans.